The sequence spans 371 residues: tRNA-specific 2-thiouridylase MnmA (371 aa).

ATP contacts are provided by residues 13 to 20 and Met-39; that span reads GMSGGVDS. The interaction with target base in tRNA stretch occupies residues 99 to 101; it reads NPD. The Nucleophile role is filled by Cys-104. Residues Cys-104 and Cys-200 are joined by a disulfide bond. Gly-128 is a binding site for ATP. Residues 150–152 form an interaction with tRNA region; sequence KDQ. Cys-200 functions as the Cysteine persulfide intermediate in the catalytic mechanism. Residues 308 to 309 form an interaction with tRNA region; that stretch reads RY.

Belongs to the MnmA/TRMU family.

It is found in the cytoplasm. It carries out the reaction S-sulfanyl-L-cysteinyl-[protein] + uridine(34) in tRNA + AH2 + ATP = 2-thiouridine(34) in tRNA + L-cysteinyl-[protein] + A + AMP + diphosphate + H(+). Its function is as follows. Catalyzes the 2-thiolation of uridine at the wobble position (U34) of tRNA, leading to the formation of s(2)U34. The polypeptide is tRNA-specific 2-thiouridylase MnmA (Geobacillus thermodenitrificans (strain NG80-2)).